An 88-amino-acid polypeptide reads, in one-letter code: UPF0297 protein LACR_0137 (88 aa).

It belongs to the UPF0297 family.

The chain is UPF0297 protein LACR_0137 from Lactococcus lactis subsp. cremoris (strain SK11).